The sequence spans 210 residues: Cytochrome c biogenesis ATP-binding export protein CcmA (210 aa).

In terms of domain architecture, ABC transporter spans 3–209 (LTVTNLACAR…PADDPFAGVT (207 aa)). 35 to 42 (GPNGIGKT) contributes to the ATP binding site.

It belongs to the ABC transporter superfamily. CcmA exporter (TC 3.A.1.107) family. The complex is composed of two ATP-binding proteins (CcmA) and two transmembrane proteins (CcmB).

It is found in the cell inner membrane. It carries out the reaction heme b(in) + ATP + H2O = heme b(out) + ADP + phosphate + H(+). Part of the ABC transporter complex CcmAB involved in the biogenesis of c-type cytochromes; once thought to export heme, this seems not to be the case, but its exact role is uncertain. Responsible for energy coupling to the transport system. This is Cytochrome c biogenesis ATP-binding export protein CcmA from Cereibacter sphaeroides (strain ATCC 17023 / DSM 158 / JCM 6121 / CCUG 31486 / LMG 2827 / NBRC 12203 / NCIMB 8253 / ATH 2.4.1.) (Rhodobacter sphaeroides).